The sequence spans 89 residues: Acyl carrier protein MbtL (89 aa).

In terms of domain architecture, Carrier spans 7-82; sequence ESVSAALTEI…DLEAAIQAKV (76 aa). Ser42 carries the post-translational modification O-(pantetheine 4'-phosphoryl)serine.

In terms of processing, 4'-phosphopantetheine is transferred from CoA to a specific serine of apo-ACP, leading to the activated holo-ACP form.

The protein localises to the cytoplasm. The protein operates within siderophore biosynthesis; mycobactin biosynthesis. Its function is as follows. Acyl carrier protein involved in the formation of acyl-S-ACP intermediates within the mycobactin biosynthesis process. This chain is Acyl carrier protein MbtL (mbtL), found in Mycobacterium sp. (strain MCS).